Consider the following 315-residue polypeptide: Malate dehydrogenase (315 aa).

Residues 11–16 and Asp-35 contribute to the NAD(+) site; that span reads GAGHVG. 2 residues coordinate substrate: Arg-84 and Arg-90. Residues Asn-97 and 120–122 contribute to the NAD(+) site; that span reads VTN. Positions 122 and 153 each coordinate substrate. His-177 serves as the catalytic Proton acceptor.

This sequence belongs to the LDH/MDH superfamily. MDH type 3 family.

It carries out the reaction (S)-malate + NAD(+) = oxaloacetate + NADH + H(+). Catalyzes the reversible oxidation of malate to oxaloacetate. This Thermosulfidibacter takaii (strain DSM 17441 / JCM 13301 / NBRC 103674 / ABI70S6) protein is Malate dehydrogenase.